We begin with the raw amino-acid sequence, 677 residues long: DNA ligase (677 aa).

Residues 38–42 (DYDFD), 87–88 (SL), and Glu121 contribute to the NAD(+) site. The N6-AMP-lysine intermediate role is filled by Lys123. NAD(+) contacts are provided by Arg144, Glu187, Lys300, and Lys324. The Zn(2+) site is built by Cys418, Cys421, Cys436, and Cys442. The 77-residue stretch at 601 to 677 (LINSNFEGLS…ISEEEFEAML (77 aa)) folds into the BRCT domain.

This sequence belongs to the NAD-dependent DNA ligase family. LigA subfamily. Mg(2+) is required as a cofactor. Mn(2+) serves as cofactor.

The catalysed reaction is NAD(+) + (deoxyribonucleotide)n-3'-hydroxyl + 5'-phospho-(deoxyribonucleotide)m = (deoxyribonucleotide)n+m + AMP + beta-nicotinamide D-nucleotide.. Its function is as follows. DNA ligase that catalyzes the formation of phosphodiester linkages between 5'-phosphoryl and 3'-hydroxyl groups in double-stranded DNA using NAD as a coenzyme and as the energy source for the reaction. It is essential for DNA replication and repair of damaged DNA. The polypeptide is DNA ligase (Chlorobium luteolum (strain DSM 273 / BCRC 81028 / 2530) (Pelodictyon luteolum)).